The following is a 105-amino-acid chain: Synaptic plasticity regulator PANTS (105 aa).

The protein belongs to the UPF0545 family. As to quaternary structure, interacts with RTN4 isoform A/Nogo-A; the interaction results in enhanced RTN4-mediated inhibition of AMPA receptor clustering. Also interacts with NCAM1, RANBP2 and CCT8. In terms of processing, rapidly degraded by proteolysis following neuronal stimulation, resulting in increased AMPA receptor clustering. In the postnatal brain, expressed diffusely throughout the hippocampus at a low level at 8 weeks (at protein level). At 16 weeks, strongly expressed in the stratum lucidum of the hippocampus (at protein level). In developing and aging brain, expression is strongest in hippocampus, especially in areas CA3 and CA2, throughout the dorsoventral axis.

The protein localises to the synapse. Its subcellular location is the synaptic cleft. Functionally, negatively regulates long-term potentiation and modulates adult synaptic plasticity. Stabilizes the interaction of RTN4 isoform A/Nogo-A with its receptors, inhibiting clustering of postsynaptic AMPA receptors at synaptic sites. Upon neuronal stimulation, degraded at synapses, reducing RTN4 signaling and allowing AMPA receptor clustering at individual synapses. The chain is Synaptic plasticity regulator PANTS from Mus musculus (Mouse).